The following is a 684-amino-acid chain: Glycine--tRNA ligase beta subunit (684 aa).

This sequence belongs to the class-II aminoacyl-tRNA synthetase family. As to quaternary structure, tetramer of two alpha and two beta subunits.

The protein localises to the cytoplasm. It catalyses the reaction tRNA(Gly) + glycine + ATP = glycyl-tRNA(Gly) + AMP + diphosphate. This Pseudomonas fluorescens (strain ATCC BAA-477 / NRRL B-23932 / Pf-5) protein is Glycine--tRNA ligase beta subunit.